Here is a 155-residue protein sequence, read N- to C-terminus: 6,7-dimethyl-8-ribityllumazine synthase (155 aa).

5-amino-6-(D-ribitylamino)uracil contacts are provided by residues phenylalanine 22, 56–58, and 80–82; these read AFE and AVI. Residue 85–86 coordinates (2S)-2-hydroxy-3-oxobutyl phosphate; that stretch reads ST. Histidine 88 functions as the Proton donor in the catalytic mechanism. Phenylalanine 113 is a 5-amino-6-(D-ribitylamino)uracil binding site. Arginine 127 contributes to the (2S)-2-hydroxy-3-oxobutyl phosphate binding site.

This sequence belongs to the DMRL synthase family.

The catalysed reaction is (2S)-2-hydroxy-3-oxobutyl phosphate + 5-amino-6-(D-ribitylamino)uracil = 6,7-dimethyl-8-(1-D-ribityl)lumazine + phosphate + 2 H2O + H(+). Its pathway is cofactor biosynthesis; riboflavin biosynthesis; riboflavin from 2-hydroxy-3-oxobutyl phosphate and 5-amino-6-(D-ribitylamino)uracil: step 1/2. In terms of biological role, catalyzes the formation of 6,7-dimethyl-8-ribityllumazine by condensation of 5-amino-6-(D-ribitylamino)uracil with 3,4-dihydroxy-2-butanone 4-phosphate. This is the penultimate step in the biosynthesis of riboflavin. This chain is 6,7-dimethyl-8-ribityllumazine synthase, found in Caldicellulosiruptor bescii (strain ATCC BAA-1888 / DSM 6725 / KCTC 15123 / Z-1320) (Anaerocellum thermophilum).